We begin with the raw amino-acid sequence, 347 residues long: Dihydroorotase (347 aa).

2 residues coordinate Zn(2+): His-17 and His-19. Residues 19 to 21 (HLR) and Asn-45 contribute to the substrate site. Zn(2+)-binding residues include Lys-103, His-140, and His-178. Residue Lys-103 is modified to N6-carboxylysine. His-140 is a binding site for substrate. Leu-223 contacts substrate. Position 251 (Asp-251) interacts with Zn(2+). The active site involves Asp-251. Residues His-255 and Ala-267 each contribute to the substrate site.

This sequence belongs to the metallo-dependent hydrolases superfamily. DHOase family. Class II DHOase subfamily. Homodimer. Requires Zn(2+) as cofactor.

The enzyme catalyses (S)-dihydroorotate + H2O = N-carbamoyl-L-aspartate + H(+). Its pathway is pyrimidine metabolism; UMP biosynthesis via de novo pathway; (S)-dihydroorotate from bicarbonate: step 3/3. In terms of biological role, catalyzes the reversible cyclization of carbamoyl aspartate to dihydroorotate. The sequence is that of Dihydroorotase from Pectobacterium carotovorum subsp. carotovorum (strain PC1).